The following is a 223-amino-acid chain: Rho-related protein racE (223 aa).

18 to 25 (GDGAVGKT) lines the GTP pocket. An Effector region motif is present at residues 40–48 (YVPTVFENY). GTP-binding positions include 65-69 (DTAGQ) and 123-126 (TKID). The interval 187–223 (GMDKKSQDGSSSASGVPSGDKPTKGKAGKKKSGCIIL) is disordered. Positions 210–223 (KGKAGKKKSGCIIL) are enriched in basic residues. Cys220 carries the post-translational modification Cysteine methyl ester. The S-geranylgeranyl cysteine moiety is linked to residue Cys220. Residues 221-223 (IIL) constitute a propeptide, removed in mature form.

Belongs to the small GTPase superfamily. Rho family. Interacts with rgaA.

It is found in the cell membrane. In terms of biological role, specifically required for cytokinesis. This Dictyostelium discoideum (Social amoeba) protein is Rho-related protein racE (racE).